The sequence spans 287 residues: Large ribosomal subunit protein uL2 (287 aa).

The tract at residues R221–S287 is disordered. Residues K258 to S287 are compositionally biased toward basic residues.

This sequence belongs to the universal ribosomal protein uL2 family. In terms of assembly, part of the 50S ribosomal subunit. Forms a bridge to the 30S subunit in the 70S ribosome.

In terms of biological role, one of the primary rRNA binding proteins. Required for association of the 30S and 50S subunits to form the 70S ribosome, for tRNA binding and peptide bond formation. It has been suggested to have peptidyltransferase activity; this is somewhat controversial. Makes several contacts with the 16S rRNA in the 70S ribosome. The sequence is that of Large ribosomal subunit protein uL2 from Prochlorococcus marinus (strain MIT 9312).